The following is a 200-amino-acid chain: 3-isopropylmalate dehydratase small subunit (200 aa).

Belongs to the LeuD family. LeuD type 1 subfamily. In terms of assembly, heterodimer of LeuC and LeuD.

The enzyme catalyses (2R,3S)-3-isopropylmalate = (2S)-2-isopropylmalate. The protein operates within amino-acid biosynthesis; L-leucine biosynthesis; L-leucine from 3-methyl-2-oxobutanoate: step 2/4. Its function is as follows. Catalyzes the isomerization between 2-isopropylmalate and 3-isopropylmalate, via the formation of 2-isopropylmaleate. This chain is 3-isopropylmalate dehydratase small subunit, found in Yersinia pseudotuberculosis serotype I (strain IP32953).